Here is a 372-residue protein sequence, read N- to C-terminus: Transcription factor MYB80 (372 aa).

HTH myb-type domains follow at residues 9–65 (KDNV…RPDL) and 66–116 (KHGE…KKKL). 2 DNA-binding regions (H-T-H motif) span residues 37-61 (WRLI…TNYL) and 89-112 (WSVI…NTKL). A compositionally biased stretch (polar residues) spans 298–311 (MWSHQSLYSGSSGT). The segment at 298–347 (MWSHQSLYSGSSGTEEARRELPEKGNDSVGSSGGDDDAADDGKDSGKGAA) is disordered. Residues 312 to 323 (EEARRELPEKGN) show a composition bias toward basic and acidic residues.

It localises to the nucleus. Functionally, essential for tapetum development in anthers and microsporogenesis. May regulate the timing of tapetal programmed cell death (PCD) which is critical for pollen development. The polypeptide is Transcription factor MYB80 (Oryza sativa subsp. japonica (Rice)).